Consider the following 203-residue polypeptide: Endothelin-1 (203 aa).

A signal peptide spans 1–25; that stretch reads MDYFPMIIALLFVAFQGAPETAVLG. Residues 26-50 constitute a propeptide that is removed on maturation; sequence AELSPEAESQGETPSPHASWRPRRS. Positions 27–48 are disordered; it reads ELSPEAESQGETPSPHASWRPR. Disulfide bonds link cysteine 53–cysteine 67 and cysteine 55–cysteine 63. The propeptide occupies 83–203; sequence YGLGSPSRSR…DKKVTHNRTH (121 aa). The tract at residues 110-124 is endothelin-like; that stretch reads CQCASQKDKKCWSFC. Asparagine 200 is a glycosylation site (N-linked (GlcNAc...) asparagine).

Belongs to the endothelin/sarafotoxin family.

Its subcellular location is the secreted. Endothelins are endothelium-derived vasoconstrictor peptides. Probable ligand for G-protein coupled receptors EDNRA and EDNRB which activates PTK2B, BCAR1, BCAR3 and, GTPases RAP1 and RHOA cascade in glomerular mesangial cells. Also binds the DEAR/FBXW7-AS1 receptor. Promotes mesenteric arterial wall remodeling via activation of ROCK signaling and subsequent colocalization of NFATC3 with F-actin filaments. NFATC3 then translocates to the nucleus where it subsequently promotes the transcription of the smooth muscle hypertrophy and differentiation marker ACTA2. This is Endothelin-1 (EDN1) from Sus scrofa (Pig).